Reading from the N-terminus, the 455-residue chain is Kynurenine 3-monooxygenase (455 aa).

This sequence belongs to the aromatic-ring hydroxylase family. KMO subfamily. FAD is required as a cofactor.

The catalysed reaction is L-kynurenine + NADPH + O2 + H(+) = 3-hydroxy-L-kynurenine + NADP(+) + H2O. Its pathway is cofactor biosynthesis; NAD(+) biosynthesis; quinolinate from L-kynurenine: step 1/3. Catalyzes the hydroxylation of L-kynurenine (L-Kyn) to form 3-hydroxy-L-kynurenine (L-3OHKyn). Required for synthesis of quinolinic acid. In Xanthomonas oryzae pv. oryzae (strain MAFF 311018), this protein is Kynurenine 3-monooxygenase.